Reading from the N-terminus, the 974-residue chain is Bifunctional glutamine synthetase adenylyltransferase/adenylyl-removing enzyme (974 aa).

The interval M1–Q464 is adenylyl removase. Residues L468 to Y974 are adenylyl transferase.

This sequence belongs to the GlnE family. It depends on Mg(2+) as a cofactor.

It carries out the reaction [glutamine synthetase]-O(4)-(5'-adenylyl)-L-tyrosine + phosphate = [glutamine synthetase]-L-tyrosine + ADP. It catalyses the reaction [glutamine synthetase]-L-tyrosine + ATP = [glutamine synthetase]-O(4)-(5'-adenylyl)-L-tyrosine + diphosphate. Involved in the regulation of glutamine synthetase GlnA, a key enzyme in the process to assimilate ammonia. When cellular nitrogen levels are high, the C-terminal adenylyl transferase (AT) inactivates GlnA by covalent transfer of an adenylyl group from ATP to specific tyrosine residue of GlnA, thus reducing its activity. Conversely, when nitrogen levels are low, the N-terminal adenylyl removase (AR) activates GlnA by removing the adenylyl group by phosphorolysis, increasing its activity. The regulatory region of GlnE binds the signal transduction protein PII (GlnB) which indicates the nitrogen status of the cell. This is Bifunctional glutamine synthetase adenylyltransferase/adenylyl-removing enzyme from Bartonella henselae (strain ATCC 49882 / DSM 28221 / CCUG 30454 / Houston 1) (Rochalimaea henselae).